A 151-amino-acid polypeptide reads, in one-letter code: Testis-expressed protein 29 (151 aa).

The Extracellular portion of the chain corresponds to M1–P56. A helical transmembrane segment spans residues I57–I77. Over I78–D151 the chain is Cytoplasmic. The interval K100–D151 is disordered. Residues L107–A119 show a composition bias toward low complexity.

It is found in the membrane. The protein is Testis-expressed protein 29 (TEX29) of Homo sapiens (Human).